A 73-amino-acid polypeptide reads, in one-letter code: uncharacterized protein (73 aa).

Positions 1–30 are cleaved as a signal peptide; sequence MVDFYFIEEKVAYRAAFTTTGKIAATLGLA.

This is an uncharacterized protein from Archaeoglobus fulgidus (strain ATCC 49558 / DSM 4304 / JCM 9628 / NBRC 100126 / VC-16).